Here is a 272-residue protein sequence, read N- to C-terminus: MRLSSHGKKTVSTSNNPVFNRIGLFFTAAILFALFLQMLFFLRPWQDIKETKVYTFQMDYRQVLKKVDLKVGDPYWRWAGQGQTINRRIKNDSMIRSLSLRLSKNGTAIIRVNENLTAGFVQIKQKWYRMDQNAHLSSKSIQPDGKTPVYTDFKNGSKILKKTITAYLSMDKVMRLAVAQIIYSPVKSSPNRLALVMNDGNLVYANPSSLAKRMDLYPKMVATMEEKGIKNGVIDLQYGGYARKFENSDDNLLSSLSSDKSKSSSKSSNSSK.

Over 1–21 (MRLSSHGKKTVSTSNNPVFNR) the chain is Cytoplasmic. A helical membrane pass occupies residues 22–42 (IGLFFTAAILFALFLQMLFFL). Residues 43 to 115 (RPWQDIKETK…GTAIIRVNEN (73 aa)) enclose the POTRA domain. Topologically, residues 43-272 (RPWQDIKETK…SSSKSSNSSK (230 aa)) are extracellular. The tract at residues 253 to 272 (LSSLSSDKSKSSSKSSNSSK) is disordered.

Belongs to the FtsQ/DivIB family. DivIB subfamily.

It localises to the cell membrane. In terms of biological role, cell division protein that may be involved in stabilizing or promoting the assembly of the division complex. The polypeptide is Cell division protein DivIB (Oenococcus oeni (strain ATCC BAA-331 / PSU-1)).